A 239-amino-acid chain; its full sequence is Glucosamine-6-phosphate deaminase (239 aa).

Catalysis depends on D62, which acts as the Proton acceptor; for enolization step. Residue N128 is the For ring-opening step of the active site. Residue H130 is the Proton acceptor; for ring-opening step of the active site. E135 functions as the For ring-opening step in the catalytic mechanism.

The protein belongs to the glucosamine/galactosamine-6-phosphate isomerase family. NagB subfamily.

It carries out the reaction alpha-D-glucosamine 6-phosphate + H2O = beta-D-fructose 6-phosphate + NH4(+). The protein operates within amino-sugar metabolism; N-acetylneuraminate degradation; D-fructose 6-phosphate from N-acetylneuraminate: step 5/5. In terms of biological role, catalyzes the reversible isomerization-deamination of glucosamine 6-phosphate (GlcN6P) to form fructose 6-phosphate (Fru6P) and ammonium ion. The chain is Glucosamine-6-phosphate deaminase from Lactobacillus helveticus (strain DPC 4571).